A 181-amino-acid chain; its full sequence is Nucleoside-triphosphatase THEP1 (181 aa).

Residues 12-19 (GPVGSIKS) and 104-111 (VIVIDEIG) contribute to the ATP site.

Belongs to the THEP1 NTPase family.

It catalyses the reaction a ribonucleoside 5'-triphosphate + H2O = a ribonucleoside 5'-diphosphate + phosphate + H(+). Its function is as follows. Has nucleotide phosphatase activity towards ATP, GTP, CTP, TTP and UTP. May hydrolyze nucleoside diphosphates with lower efficiency. This chain is Nucleoside-triphosphatase THEP1, found in Thermoplasma acidophilum (strain ATCC 25905 / DSM 1728 / JCM 9062 / NBRC 15155 / AMRC-C165).